Consider the following 255-residue polypeptide: 5-oxoprolinase subunit A 1 (255 aa).

It belongs to the LamB/PxpA family. Forms a complex composed of PxpA, PxpB and PxpC.

The enzyme catalyses 5-oxo-L-proline + ATP + 2 H2O = L-glutamate + ADP + phosphate + H(+). Its function is as follows. Catalyzes the cleavage of 5-oxoproline to form L-glutamate coupled to the hydrolysis of ATP to ADP and inorganic phosphate. The chain is 5-oxoprolinase subunit A 1 from Agrobacterium fabrum (strain C58 / ATCC 33970) (Agrobacterium tumefaciens (strain C58)).